The following is a 657-amino-acid chain: Katanin p80 WD40 repeat-containing subunit B1 (657 aa).

6 WD repeats span residues 18 to 58 (AHSS…CVMS), 61 to 100 (GHTTPIESLQISAKEELIVAGSQSGSIRVWDLEAAKILRT), 103 to 142 (GHKANICSLDFHPYGSFVASGSLDTDIKLWDVRRKGCIFK), 145 to 184 (SHTQAVRCLRFSPDGKWLASAADDHTVKLWDLTAGKVMFE), 187 to 226 (GHSGPVNVVEFHPSEYLLASGSSDRTIRFWDLEKFHVVSC), and 229 to 269 (EEAT…DVVV). Disordered stretches follow at residues 318–410 (NNEL…EDEP) and 423–454 (VEVQTPLPKQELPETFQRPPIASSTPMPRAEP). A compositionally biased stretch (polar residues) spans 325–345 (PTPTGSSLRRSYDRPSTSCSK). Over residues 351 to 385 (HSSESERRSPSSEEDRDEKESKAEIQNPEDYKEIF) the composition is skewed to basic and acidic residues.

This sequence belongs to the WD repeat KATNB1 family. Interacts with KATNA1. This interaction enhances the microtubule binding and severing activity of KATNA1 and also targets this activity to the centrosome.

The protein resides in the cytoplasm. The protein localises to the cytoskeleton. Its subcellular location is the microtubule organizing center. It is found in the centrosome. It localises to the spindle pole. The protein resides in the spindle. Its function is as follows. Participates in a complex which severs microtubules in an ATP-dependent manner. May act to target the enzymatic subunit of this complex to sites of action such as the centrosome. Microtubule severing may promote rapid reorganization of cellular microtubule arrays and the release of microtubules from the centrosome following nucleation. The chain is Katanin p80 WD40 repeat-containing subunit B1 from Gallus gallus (Chicken).